A 153-amino-acid polypeptide reads, in one-letter code: UPF0756 membrane protein Lm4b_01579 (153 aa).

Helical transmembrane passes span Met6–Ile26, Trp54–Phe74, Ser80–Ala100, and Leu117–Ile137.

The protein belongs to the UPF0756 family.

Its subcellular location is the cell membrane. In Listeria monocytogenes serotype 4b (strain CLIP80459), this protein is UPF0756 membrane protein Lm4b_01579.